A 567-amino-acid chain; its full sequence is Monodechloroaminopyrrolnitrin halogenase PrnC (567 aa).

It functions in the pathway antibiotic biosynthesis. Its function is as follows. Involved in the biosynthesis of the antifungal antibiotic pyrrolnitrin. Catalyzes the chlorination of monodechloroaminopyrrolnitrin (MDA) at the 3 position to form aminopyrrolnitrin (APRN). This chain is Monodechloroaminopyrrolnitrin halogenase PrnC (prnC), found in Pseudomonas fluorescens.